Reading from the N-terminus, the 199-residue chain is LIM domain-containing protein E (199 aa).

An LIM zinc-binding domain is found at 5–65 (VKCGACAKTA…PVHTPKVSAT (61 aa)). A disordered region spans residues 134-199 (YAVFGADGQP…EEEQQYEEEQ (66 aa)). Low complexity-rich tracts occupy residues 146–155 (EQQEQQQYTE) and 163–174 (EEQQYQEEQQQY). Over residues 175-199 (QEEEQQYQEEEQQYQEEEQQYEEEQ) the composition is skewed to acidic residues.

In terms of assembly, may interact with rac1A.

The protein localises to the cytoplasm. Its subcellular location is the cell cortex. It is found in the nucleus. It localises to the cell projection. The protein resides in the lamellipodium. The protein localises to the filopodium. Its subcellular location is the cytoskeleton. Associates with the actin cytoskeleton and may regulate actin polymerization in lamellipodia, through a rac1-dependent signaling pathway. May play a role in cell motility. Involved in cytokinesis by regulating the microtubule system and linking it to the cortical actin network. The chain is LIM domain-containing protein E (limE) from Dictyostelium discoideum (Social amoeba).